A 608-amino-acid polypeptide reads, in one-letter code: MNFNFNKYPILSFANSVENLRLLSVEQLPQLCFELREYLLDVVSISKGHFASGLGVVEITVALHYVYNTPFDNLLWDTGHQAYPHKILTGRGEKINSIRKKNGLHSFPCREESEYDSLSVGHSSTSISAGLGMSIAAEKEGRNRKTICIIGDGAMTAGMAFEAINHAGEIQSNLLVILNDNQMSISRNVGALNKHLKILRSVQNTQKNRKKIRLLNKKLFFKDKRIQNHSISFNSIFSNLGCKYLGPFDGHNIFSIINTLKKIKNKKGTYLLHLVTKKGKGYLPAELNPIKWHTISSRDSSVSKSLSYSDVFGTWLCEIAAFDKKLIAITPAMCEGSGMVKFSRLFPNQYFDVAIAEQHAVTFAAGLAISGYKPVVSIYSTFFQRAYDQLIHDIALQKLSVLFAVDRAGIVGNDGQTHQGVFDLAYLRCIPGIVIMTPSNENECRQMLYTGYMHNKGPSVVRYPKGYGVGALLMPMNRIPIGKSLIKRRGKKIAILNFGILLHNAYCAAEKLDATLVDMRFVKPLDKSMILKLSSQNKFFITLEEGVISGGAGSAVNEFIMVNKIFLPVLNIGLPDTFIPQGTQEEIRHVYKLDSEGIYKQIFYWLRQ.

Thiamine diphosphate-binding positions include His-80 and 121–123 (GHS). Mg(2+) is bound at residue Asp-152. Thiamine diphosphate-binding positions include 153-154 (GA), Asn-181, Tyr-282, and Glu-357. Asn-181 contributes to the Mg(2+) binding site.

This sequence belongs to the transketolase family. DXPS subfamily. In terms of assembly, homodimer. Requires Mg(2+) as cofactor. It depends on thiamine diphosphate as a cofactor.

The enzyme catalyses D-glyceraldehyde 3-phosphate + pyruvate + H(+) = 1-deoxy-D-xylulose 5-phosphate + CO2. It functions in the pathway metabolic intermediate biosynthesis; 1-deoxy-D-xylulose 5-phosphate biosynthesis; 1-deoxy-D-xylulose 5-phosphate from D-glyceraldehyde 3-phosphate and pyruvate: step 1/1. Catalyzes the acyloin condensation reaction between C atoms 2 and 3 of pyruvate and glyceraldehyde 3-phosphate to yield 1-deoxy-D-xylulose-5-phosphate (DXP). The chain is 1-deoxy-D-xylulose-5-phosphate synthase from Buchnera aphidicola subsp. Acyrthosiphon pisum (strain 5A).